We begin with the raw amino-acid sequence, 214 residues long: Leucyl/phenylalanyl-tRNA--protein transferase (214 aa).

The protein belongs to the L/F-transferase family.

It localises to the cytoplasm. It carries out the reaction N-terminal L-lysyl-[protein] + L-leucyl-tRNA(Leu) = N-terminal L-leucyl-L-lysyl-[protein] + tRNA(Leu) + H(+). It catalyses the reaction N-terminal L-arginyl-[protein] + L-leucyl-tRNA(Leu) = N-terminal L-leucyl-L-arginyl-[protein] + tRNA(Leu) + H(+). The enzyme catalyses L-phenylalanyl-tRNA(Phe) + an N-terminal L-alpha-aminoacyl-[protein] = an N-terminal L-phenylalanyl-L-alpha-aminoacyl-[protein] + tRNA(Phe). Functionally, functions in the N-end rule pathway of protein degradation where it conjugates Leu, Phe and, less efficiently, Met from aminoacyl-tRNAs to the N-termini of proteins containing an N-terminal arginine or lysine. This Cereibacter sphaeroides (strain ATCC 17029 / ATH 2.4.9) (Rhodobacter sphaeroides) protein is Leucyl/phenylalanyl-tRNA--protein transferase.